The chain runs to 141 residues: Mitochondrial import inner membrane translocase subunit tim16 (141 aa).

The J-like stretch occupies residues 59 to 117 (EACKILNVNKPADGTAANMEEVMERFKRLFDANDPEKGGSFYLQSKVVRARERLEAEIK). The disordered stretch occupies residues 119 to 141 (KMEEKQAEEEVKEGWNPKIYKDR).

The protein belongs to the TIM16/PAM16 family. Heterodimer with tim14/pam18. Component of the PAM complex, at least composed of hsp70-5/ssc1, grpe/mge1, tim44, un-4/pam16, pam17 and tim14/pam18.

It localises to the mitochondrion inner membrane. Functionally, essential component of the PAM complex, a complex required for the translocation of transit peptide-containing proteins from the inner membrane into the mitochondrial matrix in an ATP-dependent manner. In the complex, it is required to regulate activity of mtHSP70 (hsp70-5) via its interaction with tim14/pam18. May act by positioning tim14/pam18 in juxtaposition to mtHSP70 at the translocon to maximize ATPase stimulation. The protein is Mitochondrial import inner membrane translocase subunit tim16 (un-4) of Neurospora crassa (strain ATCC 24698 / 74-OR23-1A / CBS 708.71 / DSM 1257 / FGSC 987).